A 371-amino-acid polypeptide reads, in one-letter code: Probable endolytic peptidoglycan transglycosylase RlpA (371 aa).

An N-terminal signal peptide occupies residues 1 to 25 (MNQRHLWTIVALSVTVLGTPAVGRT). A compositionally biased stretch (low complexity) spans 177–191 (LVASQSQNKSSSSQQ). The tract at residues 177 to 196 (LVASQSQNKSSSSQQKSERY) is disordered.

The protein belongs to the RlpA family.

Its function is as follows. Lytic transglycosylase with a strong preference for naked glycan strands that lack stem peptides. The chain is Probable endolytic peptidoglycan transglycosylase RlpA from Nostoc sp. (strain PCC 7120 / SAG 25.82 / UTEX 2576).